We begin with the raw amino-acid sequence, 429 residues long: Lysophosphatidic acid phosphatase type 6 (429 aa).

A mitochondrion-targeting transit peptide spans 1 to 32 (MISRVFKLRMWAPVGVLTSLTYCLHQRRVALA). The interval 58–169 (RHGARSPLKP…VFIRSTNIYR (112 aa)) is substrate binding. The active-site Nucleophile is the histidine 59. Residue aspartate 336 is the Proton donor of the active site.

It belongs to the histidine acid phosphatase family. In terms of assembly, monomer. In terms of tissue distribution, detected in brain (at protein level).

The protein localises to the mitochondrion. It carries out the reaction a phosphate monoester + H2O = an alcohol + phosphate. It catalyses the reaction 1-(9Z-octadecenoyl)-sn-glycero-3-phosphate + H2O = 1-(9Z-octadecenoyl)-sn-glycerol + phosphate. Hydrolyzes lysophosphatidic acid (LPA) containing a medium length fatty acid chain to the corresponding monoacylglycerol. Has highest activity with lysophosphatidic acid containing myristate (C14:0), monounsaturated oleate (C18:1) or palmitate (C16:0), and lower activity with C18:0 and C6:0 lysophosphatidic acid. The chain is Lysophosphatidic acid phosphatase type 6 (ACP6) from Bos taurus (Bovine).